Here is a 602-residue protein sequence, read N- to C-terminus: Probable translation initiation factor IF-2 (602 aa).

The region spanning leucine 10 to methionine 227 is the tr-type G domain. A G1 region spans residues glycine 19–threonine 26. A GTP-binding site is contributed by glycine 19 to threonine 26. Residues glutamate 44–glutamate 48 are G2. Residues aspartate 83–glycine 86 form a G3 region. Residues aspartate 83 to histidine 87 and asparagine 137 to aspartate 140 contribute to the GTP site. A G4 region spans residues asparagine 137–aspartate 140. Positions serine 205–lysine 207 are G5.

Belongs to the TRAFAC class translation factor GTPase superfamily. Classic translation factor GTPase family. IF-2 subfamily.

In terms of biological role, function in general translation initiation by promoting the binding of the formylmethionine-tRNA to ribosomes. Seems to function along with eIF-2. The chain is Probable translation initiation factor IF-2 from Sulfurisphaera tokodaii (strain DSM 16993 / JCM 10545 / NBRC 100140 / 7) (Sulfolobus tokodaii).